The following is a 1217-amino-acid chain: ATP-dependent helicase/nuclease subunit A (1217 aa).

The UvrD-like helicase ATP-binding domain maps to 10–475; sequence VIWTDAQWQS…IDLSQNFRSR (466 aa). 31–38 is a binding site for ATP; the sequence is AAAGSGKT. Positions 476–786 constitute a UvrD-like helicase C-terminal domain; the sequence is KEVLSTTNYI…RMMTIHSSKG (311 aa).

The protein belongs to the helicase family. AddA subfamily. In terms of assembly, heterodimer of AddA and AddB/RexB. Mg(2+) serves as cofactor.

The catalysed reaction is Couples ATP hydrolysis with the unwinding of duplex DNA by translocating in the 3'-5' direction.. It catalyses the reaction ATP + H2O = ADP + phosphate + H(+). Functionally, the heterodimer acts as both an ATP-dependent DNA helicase and an ATP-dependent, dual-direction single-stranded exonuclease. Recognizes the chi site generating a DNA molecule suitable for the initiation of homologous recombination. The AddA nuclease domain is required for chi fragment generation; this subunit has the helicase and 3' -&gt; 5' nuclease activities. This chain is ATP-dependent helicase/nuclease subunit A, found in Staphylococcus aureus (strain MW2).